A 309-amino-acid chain; its full sequence is tRNA dimethylallyltransferase (309 aa).

10 to 17 is a binding site for ATP; the sequence is GPTAVGKT. Residue 12–17 participates in substrate binding; that stretch reads TAVGKT. The interaction with substrate tRNA stretch occupies residues 35 to 38; it reads DSMQ.

Belongs to the IPP transferase family. Monomer. Requires Mg(2+) as cofactor.

The enzyme catalyses adenosine(37) in tRNA + dimethylallyl diphosphate = N(6)-dimethylallyladenosine(37) in tRNA + diphosphate. Its function is as follows. Catalyzes the transfer of a dimethylallyl group onto the adenine at position 37 in tRNAs that read codons beginning with uridine, leading to the formation of N6-(dimethylallyl)adenosine (i(6)A). The protein is tRNA dimethylallyltransferase of Clostridium botulinum (strain Eklund 17B / Type B).